The sequence spans 142 residues: HTH-type transcriptional regulator LysM (142 aa).

One can recognise an HTH asnC-type domain in the interval 6 to 69 (IDESDLKILE…ELENEIRAIV (64 aa)). A DNA-binding region (H-T-H motif) is located at residues 25–44 (YTLIAKELKVSEAAIRKRIE).

Homotetramer.

The protein resides in the cytoplasm. The protein operates within amino-acid biosynthesis; L-lysine biosynthesis via AAA pathway [regulation]. In terms of biological role, in the absence or at low concentrations of lysine, activates the biosynthesis of this amino acid via the alpha-aminoadipate (AAA) pathway. The chain is HTH-type transcriptional regulator LysM (lysM) from Saccharolobus solfataricus (strain ATCC 35092 / DSM 1617 / JCM 11322 / P2) (Sulfolobus solfataricus).